A 1011-amino-acid polypeptide reads, in one-letter code: Liprin-beta-1 (1011 aa).

The residue at position 37 (Ser-37) is a Phosphoserine. At Thr-39 the chain carries Phosphothreonine. Position 40 is a phosphoserine (Ser-40). A coiled-coil region spans residues 156–405; that stretch reads QQELLSRTSL…VPEEFHTTIL (250 aa). Lys-322 is modified (N6-acetyllysine). 2 disordered regions span residues 420–439 and 463–634; these read ETSE…EEND and KSSS…RDLG. A phosphoserine mark is found at Ser-434 and Ser-466. Over residues 470–492 the composition is skewed to basic and acidic residues; sequence LKKETSDGEKETIQKTSEDRAPA. Lys-471 participates in a covalent cross-link: Glycyl lysine isopeptide (Lys-Gly) (interchain with G-Cter in SUMO2). A phosphoserine mark is found at Ser-523 and Ser-540. Positions 546–556 are enriched in basic and acidic residues; that stretch reads ETEKETAEHLD. Ser-579 is subject to Phosphoserine. A compositionally biased stretch (basic residues) spans 584 to 598; it reads KKSRGIMKLFGKLRR. Ser-601 and Ser-636 each carry phosphoserine. SAM domains lie at 647–711 and 719–782; these read WTKE…LGSE and LDFN…LRIN. At Ser-794 the chain carries Phosphoserine. The region spanning 804-876 is the SAM 3 domain; sequence VQKWTNHRVM…ATHFNLLIGA (73 aa). Residues Ser-999, Ser-1001, and Ser-1003 each carry the phosphoserine modification. Position 1005 is a phosphothreonine (Thr-1005).

The protein belongs to the liprin family. Liprin-beta subfamily. As to quaternary structure, forms homodimers and heterodimers. Interacts with S100A4 in a Ca(2+)-dependent mode. Part of a cortical microtubule stabilization complex (CMSC) composed of KANK1, PPFIA1, PPFIBP1, ERC1/ELKS, PHLDB2/LL5beta, CLASPs, KIF21A and possibly additional interactors; within CMSCs KANK1 and PHLDB2/LL5beta seem to be the core components for recruiting microtubule-binding proteins KIF21A and CLASPs, whereas PPFIA1, PPFIBP1 and ERC1/ELKS serve as scaffolds for protein clustering. Interacts with KANK1 (via CC1 domain, residues 244-339). As to expression, widely expressed. Absent in liver.

The protein resides in the cytoplasm. It localises to the cell cortex. Functionally, may regulate the disassembly of focal adhesions. Did not bind receptor-like tyrosine phosphatases type 2A. The polypeptide is Liprin-beta-1 (PPFIBP1) (Homo sapiens (Human)).